Here is a 387-residue protein sequence, read N- to C-terminus: Enoyl-[acyl-carrier-protein] reductase 2, mitochondrial (387 aa).

A mitochondrion-targeting transit peptide spans 1 to 23 (MYRNQLARASLRSTSSINQIRNM). Catalysis depends on tyrosine 79, which acts as the Proton donor. NADP(+)-binding positions include asparagine 172, 199–202 (NSAV), 222–224 (RDR), 297–300 (YGGM), 322–324 (FWV), and lysine 382.

The protein belongs to the zinc-containing alcohol dehydrogenase family. Quinone oxidoreductase subfamily. In terms of assembly, homodimer.

The protein localises to the mitochondrion matrix. The enzyme catalyses a 2,3-saturated acyl-[ACP] + NADP(+) = a (2E)-enoyl-[ACP] + NADPH + H(+). Its function is as follows. Catalyzes the NADPH-dependent reduction of trans-2-enoyl thioesters in mitochondrial fatty acid synthesis (fatty acid synthesis type II). Fatty acid chain elongation in mitochondria uses acyl carrier protein (ACP) as an acyl group carrier, but the enzyme accepts both ACP and CoA thioesters as substrates in vitro. Required for respiration and the maintenance of the mitochondrial compartment. The polypeptide is Enoyl-[acyl-carrier-protein] reductase 2, mitochondrial (ETR2) (Debaryomyces hansenii (strain ATCC 36239 / CBS 767 / BCRC 21394 / JCM 1990 / NBRC 0083 / IGC 2968) (Yeast)).